A 155-amino-acid polypeptide reads, in one-letter code: Fibroblast growth factor 2 (155 aa).

Positions 1–9 (MAAGSITTL) are excised as a propeptide. The span at 1–11 (MAAGSITTLPT) shows a compositional bias: polar residues. Residues 1-24 (MAAGSITTLPTESEDGGNTPFSPG) form a disordered region. Heparin is bound by residues 27–31 (KDPKR) and 116–119 (RSRK).

Belongs to the heparin-binding growth factors family.

The protein resides in the secreted. The protein localises to the nucleus. Functionally, acts as a ligand for FGFR1, FGFR2, FGFR3 and FGFR4. Also acts as an integrin ligand which is required for FGF2 signaling. Plays an important role in the regulation of cell survival, cell division, cell differentiation and cell migration. Functions as a potent mitogen in vitro. Can induce angiogenesis. The sequence is that of Fibroblast growth factor 2 (fgf2) from Xenopus laevis (African clawed frog).